The sequence spans 420 residues: UDP-glucuronic acid decarboxylase 1 (420 aa).

At Met1 the chain carries N-acetylmethionine. Over 1 to 19 the chain is Cytoplasmic; that stretch reads MVSKALLRLVSAVNRRRMK. Residues 20–40 form a helical; Signal-anchor for type II membrane protein membrane-spanning segment; it reads LLLGIALLAYVASVWGNFVNM. Topologically, residues 41–420 are lumenal; the sequence is RSIQENGELK…RIKKGRTRHN (380 aa). Thr94 carries the phosphothreonine modification. Gly98, Phe99, Val100, Asp119, Asn120, Phe122, Thr123, Gly124, Asp144, and Val145 together coordinate NAD(+). Residues Leu149 and Tyr150 each contribute to the UDP-alpha-D-glucuronate site. The NAD(+) site is built by Leu159 and Ser161. A UDP-alpha-D-glucuronate-binding site is contributed by Lys177. An NAD(+)-binding site is contributed by Thr178. UDP-alpha-D-glucuronate-binding residues include Asn185, Gly188, Lys191, and Arg192. NAD(+) is bound by residues Ala200, Tyr231, and Lys235. The active-site Proton acceptor is the Tyr231. Residues Tyr245, Gln248, and Glu249 each coordinate UDP-alpha-D-glucuronate. NAD(+) is bound by residues Thr261, His267, and Arg272. An N-linked (GlcNAc...) asparagine glycan is attached at Asn316.

It belongs to the NAD(P)-dependent epimerase/dehydratase family. UDP-glucuronic acid decarboxylase subfamily. Homodimer and homotetramer. Interacts with AKT1. The cofactor is NAD(+).

It localises to the golgi apparatus. Its subcellular location is the golgi stack membrane. The enzyme catalyses UDP-alpha-D-glucuronate + H(+) = UDP-alpha-D-xylose + CO2. It functions in the pathway nucleotide-sugar biosynthesis; UDP-alpha-D-xylose biosynthesis; UDP-alpha-D-xylose from UDP-alpha-D-glucuronate: step 1/1. Functionally, catalyzes the NAD-dependent decarboxylation of UDP-glucuronic acid to UDP-xylose. Necessary for the biosynthesis of the core tetrasaccharide in glycosaminoglycan biosynthesis. The chain is UDP-glucuronic acid decarboxylase 1 (UXS1) from Pongo abelii (Sumatran orangutan).